Reading from the N-terminus, the 437-residue chain is Enolase (437 aa).

Gln-162 is a binding site for (2R)-2-phosphoglycerate. Residue Glu-204 is the Proton donor of the active site. Residues Asp-251, Glu-297, and Asp-324 each coordinate Mg(2+). 4 residues coordinate (2R)-2-phosphoglycerate: Lys-349, Arg-378, Ser-379, and Lys-400. The Proton acceptor role is filled by Lys-349.

It belongs to the enolase family. Requires Mg(2+) as cofactor.

It localises to the cytoplasm. The protein resides in the secreted. Its subcellular location is the cell surface. It carries out the reaction (2R)-2-phosphoglycerate = phosphoenolpyruvate + H2O. It participates in carbohydrate degradation; glycolysis; pyruvate from D-glyceraldehyde 3-phosphate: step 4/5. Its function is as follows. Catalyzes the reversible conversion of 2-phosphoglycerate (2-PG) into phosphoenolpyruvate (PEP). It is essential for the degradation of carbohydrates via glycolysis. The polypeptide is Enolase (Chlorobaculum parvum (strain DSM 263 / NCIMB 8327) (Chlorobium vibrioforme subsp. thiosulfatophilum)).